The following is a 107-amino-acid chain: Cytochrome c2 (107 aa).

A Pyrrolidone carboxylic acid modification is found at Gln-1. Heme c is bound by residues Cys-13, Cys-16, His-17, and Met-79.

It belongs to the cytochrome c family. In terms of processing, binds 1 heme c group covalently per subunit.

It localises to the periplasm. Functionally, cytochrome c2 is found mainly in purple, non-sulfur, photosynthetic bacteria where it functions as the electron donor to the oxidized bacteriochlorophyll in the photophosphorylation pathway. However, it may also have a role in the respiratory chain and is found in some non-photosynthetic bacteria. This chain is Cytochrome c2, found in Rhodoplanes tepidamans (Rhodoplanes cryptolactis).